Reading from the N-terminus, the 629-residue chain is tRNA uridine 5-carboxymethylaminomethyl modification enzyme MnmG (629 aa).

FAD is bound by residues 13-18, Val125, and Ser180; that span reads GGGHAG. Position 273–287 (273–287) interacts with NAD(+); that stretch reads GPRYCPSIEDKVMRF. Gln370 is an FAD binding site.

Belongs to the MnmG family. Homodimer. Heterotetramer of two MnmE and two MnmG subunits. The cofactor is FAD.

Its subcellular location is the cytoplasm. In terms of biological role, NAD-binding protein involved in the addition of a carboxymethylaminomethyl (cmnm) group at the wobble position (U34) of certain tRNAs, forming tRNA-cmnm(5)s(2)U34. This Sodalis glossinidius (strain morsitans) protein is tRNA uridine 5-carboxymethylaminomethyl modification enzyme MnmG.